The primary structure comprises 324 residues: Dehydrogenase/reductase SDR family member 7C-A (324 aa).

An N-terminal signal peptide occupies residues 1-17 (MAVPSVMVLPLLIVVFA). 41 to 65 (VITDAVSGMGSECARLFHAGGARLV) provides a ligand contact to NAD(+). S178 serves as a coordination point for substrate. Y191 serves as the catalytic Proton acceptor.

This sequence belongs to the short-chain dehydrogenases/reductases (SDR) family.

It is found in the secreted. Putative oxidoreductase. This chain is Dehydrogenase/reductase SDR family member 7C-A (dhrs7ca), found in Danio rerio (Zebrafish).